Consider the following 497-residue polypeptide: Glycerol kinase (497 aa).

Threonine 11 lines the ADP pocket. ATP-binding residues include threonine 11, threonine 12, and serine 13. Threonine 11 serves as a coordination point for sn-glycerol 3-phosphate. Arginine 15 provides a ligand contact to ADP. Residues arginine 81, glutamate 82, tyrosine 134, and aspartate 244 each coordinate sn-glycerol 3-phosphate. Glycerol is bound by residues arginine 81, glutamate 82, tyrosine 134, aspartate 244, and glutamine 245. Residues threonine 266 and glycine 309 each coordinate ADP. Residues threonine 266, glycine 309, glutamine 313, and glycine 410 each coordinate ATP. Residues glycine 410 and asparagine 414 each coordinate ADP.

Belongs to the FGGY kinase family.

It carries out the reaction glycerol + ATP = sn-glycerol 3-phosphate + ADP + H(+). Its pathway is polyol metabolism; glycerol degradation via glycerol kinase pathway; sn-glycerol 3-phosphate from glycerol: step 1/1. Its activity is regulated as follows. Inhibited by fructose 1,6-bisphosphate (FBP). In terms of biological role, key enzyme in the regulation of glycerol uptake and metabolism. Catalyzes the phosphorylation of glycerol to yield sn-glycerol 3-phosphate. The chain is Glycerol kinase from Fusobacterium nucleatum subsp. nucleatum (strain ATCC 25586 / DSM 15643 / BCRC 10681 / CIP 101130 / JCM 8532 / KCTC 2640 / LMG 13131 / VPI 4355).